The sequence spans 760 residues: ATP-dependent zinc metalloprotease FtsH (760 aa).

Topologically, residues 1-5 (MNRKN) are cytoplasmic. Residues 6-26 (VTRTITAIAVVVLLGWSFFYF) traverse the membrane as a helical segment. Residues 27–110 (SDDTRGYKPV…KVSTVVNQGS (84 aa)) are Extracellular-facing. Residues 111 to 131 (ILGELLVYVLPLLLLVGLFVM) form a helical membrane-spanning segment. Topologically, residues 132-760 (FSRMQGGARM…EVSRTKPAHG (629 aa)) are cytoplasmic. 203–210 (GPPGTGKT) lines the ATP pocket. Residue histidine 425 participates in Zn(2+) binding. Residue glutamate 426 is part of the active site. Residues histidine 429 and aspartate 501 each contribute to the Zn(2+) site. The tract at residues 616 to 760 (DFGGRIPSDK…EVSRTKPAHG (145 aa)) is disordered. Low complexity predominate over residues 650 to 669 (AFKAAIAQATQAAEAARSDA). Over residues 740 to 750 (GSDESSAEQDD) the composition is skewed to acidic residues.

It in the central section; belongs to the AAA ATPase family. The protein in the C-terminal section; belongs to the peptidase M41 family. Homohexamer. Requires Zn(2+) as cofactor.

Its subcellular location is the cell membrane. In terms of biological role, acts as a processive, ATP-dependent zinc metallopeptidase for both cytoplasmic and membrane proteins. Plays a role in the quality control of integral membrane proteins. The sequence is that of ATP-dependent zinc metalloprotease FtsH from Mycobacterium bovis (strain ATCC BAA-935 / AF2122/97).